The chain runs to 232 residues: 6-phosphogluconolactonase (232 aa).

It belongs to the glucosamine/galactosamine-6-phosphate isomerase family. 6-phosphogluconolactonase subfamily.

The enzyme catalyses 6-phospho-D-glucono-1,5-lactone + H2O = 6-phospho-D-gluconate + H(+). It functions in the pathway carbohydrate degradation; pentose phosphate pathway; D-ribulose 5-phosphate from D-glucose 6-phosphate (oxidative stage): step 2/3. Its function is as follows. Hydrolysis of 6-phosphogluconolactone to 6-phosphogluconate. The protein is 6-phosphogluconolactonase (pgl) of Rhizobium meliloti (strain 1021) (Ensifer meliloti).